The following is a 249-amino-acid chain: Small ribosomal subunit protein uS3y (249 aa).

The KH type-2 domain maps to 21-92; sequence LNEVLTRELA…SVELYAEKVN (72 aa). S212 is modified (phosphoserine).

Belongs to the universal ribosomal protein uS3 family.

The protein is Small ribosomal subunit protein uS3y (RPS3B) of Arabidopsis thaliana (Mouse-ear cress).